The sequence spans 806 residues: MSGWPRIYYKLLNLPLSILVKSKSIPAEPAQELGLDTSRPIMYVLPYNSKADLLTLRAQCLAHDLPDPLEPLEIDGALLPRYVFIHGGPRVFTYYTPKEESVKLFHDYLDLHRSNPALDVQMVPVSVMFGRAPGREKGEENPPLRMLNGVQKFFAISWLGRDSFVRFSPSVSLRRMADEHGTDKIIAQKLARVARMHFARQRLAAVGPRLPARQDLFNKLLASKAIARAVEDEARSKKISHEKAQQNAIALMEEIAANFSYEMIRLTDRILGFTWNRLYQGINVHNAERVRQLAHDGHEIVYVPCHRSHMDYLLLSYVLYHQGLVPPHIAAGINLNFWPAGPIFRRLGAFFIRRTFKGNKLYSTVFREYLGELFSRGYSVEYFVEGGRSRTGRLLDPKTGTLSMTIQAMLRGGTRPITLVPIYIGYEHVMEVGTYAKELRGATKEKESLPQMLKGLSKLRNLGQGYVNFGEPMPLMTYLNQHVPEWRESIDPIEAIRPAWLTPTVNSIAADLMVRINNAGAANAMNLCCTALLASRQRSLTREQLTEQLDCYLDLMRNVPYSTDSTVPAASAGELIAHALQMNKFEVEKDTIGDIIILPREQAVLMTYYRNNIAHMLIMPSLMAAIITQHRRISRDALQQHVEALYPMLKAELFLRWEREELASVIDALASEMQRQGLITLQDDELHINPTHSRTLQLLAAGARETLQRYAITFWLLSANPSINRSTLEKESRTVAQRLSVLHGINAPEFFDKAVFSSLVLTLRDEGYISDTGDAEPAETMKIYQMLADLITSDVRLTIESATQGE.

An HXXXXD motif motif is present at residues 305-310 (CHRSHM).

Belongs to the GPAT/DAPAT family.

It is found in the cell inner membrane. It carries out the reaction sn-glycerol 3-phosphate + an acyl-CoA = a 1-acyl-sn-glycero-3-phosphate + CoA. It functions in the pathway phospholipid metabolism; CDP-diacylglycerol biosynthesis; CDP-diacylglycerol from sn-glycerol 3-phosphate: step 1/3. In Salmonella paratyphi A (strain ATCC 9150 / SARB42), this protein is Glycerol-3-phosphate acyltransferase.